A 327-amino-acid chain; its full sequence is Olfactory receptor 51T1 (327 aa).

Residues 1 to 27 (MAIFNNTTSSSSNFLLTAFPGLECAHV) are Extracellular-facing. Asn-5 and Asn-6 each carry an N-linked (GlcNAc...) asparagine glycan. A helical membrane pass occupies residues 28–48 (WISIPVCCLYTIALLGNSMIF). The Cytoplasmic portion of the chain corresponds to 49–56 (LVIITKRR). The helical transmembrane segment at 57 to 77 (LHKPMYYFLSMLAAVDLCLTI) threads the bilayer. The Extracellular portion of the chain corresponds to 78–101 (TTLPTVLGVLWFHAREISFKACFI). Residues 102-122 (QMFFVHAFSLLESSVLVAMAF) traverse the membrane as a helical segment. Over 123–141 (DRFVAICNPLNYATILTDR) the chain is Cytoplasmic. A helical membrane pass occupies residues 142–162 (MVLVIGLVICIRPAVFLLPLL). Topologically, residues 163–198 (VAINTVSFHGGHELSHPFCYHPEVIKYTYSKPWISS) are extracellular. The helical transmembrane segment at 199 to 219 (FWGLFLQLYLNGTDVLFILFS) threads the bilayer. At 220-239 (YVLILRTVLGIVARKKQQKA) the chain is on the cytoplasmic side. The helical transmembrane segment at 240 to 260 (LSTCVCHICAVTIFYVPLISL) threads the bilayer. Residues 261–275 (SLAHRLFHSTPRVLC) lie on the Extracellular side of the membrane. The chain crosses the membrane as a helical span at residues 276 to 296 (STLANIYLLLPPVLNPIIYSL). Residues 297-327 (KTKTIRQAMFQLLQSKGSWGFNVRGLRGRWD) lie on the Cytoplasmic side of the membrane.

Belongs to the G-protein coupled receptor 1 family.

Its subcellular location is the cell membrane. Odorant receptor. The polypeptide is Olfactory receptor 51T1 (OR51T1) (Homo sapiens (Human)).